The sequence spans 312 residues: Fasciclin-like arabinogalactan protein elcF (312 aa).

A signal peptide spans 1–16 (MKLFTLLLPALTSAHS). 2 FAS1 domains span residues 17 to 160 (LSTL…NASM) and 162 to 289 (LPHN…DKVL). N-linked (GlcNAc...) asparagine glycans are attached at residues N48, N68, N113, N157, and N165.

It belongs to the fasciclin-like AGP family.

It participates in secondary metabolite biosynthesis. Fasciclin-like arabinogalactan protein; part of the gene cluster that mediates the biosynthesis of elsinochrome C, a perelyenequinone phytotoxin structurally similar to cercosporin. The first step of elsinochrome C biosynthesis is performed by the polyketide synthase elcA which catalyzes the formation of nor-toralactone. The starter unit acyltransferase (SAT) domain of elcA initiates polyketide extension by the selective utilization of acetyl-CoA, which is elongated to the heptaketide in the beta-ketoacyl synthase (KS) domain by successive condensations with six malonyl units introduced by the malonyl acyltransferase (MAT) domain. The product template (PT) domain catalyzes C4-C9 and C2-C11 aldol cyclizations and dehydrations to a trihydroxynaphthalene, which is thought to be delivered to the thioesterase (TE) domain for product release. The bifunctional enzyme elcB then methylates nor-toralactone to toralactone before conducting an unusual oxidative aromatic ring opening. The next step in perylenequinone biosynthesis is an O-methylation at the nascent OH-6 of the elcB product performed by the O-methyltransferase elcD. The oxidative coupling of the two monomeric naphthol units in perylenequinone biosynthesis is catalyzed by the FAD-dependent monooxygenase elcE and the multicopper oxidase elcG. ElcG might catalyze the first intermolecular coupling in a regio- and stereo-selective manner via a phenol radical coupling mechanism and the elcE could forge the second C-C bond intramolecularly via a hydride transfer mechanism. The fasciclin domain-containing protein elcF might also play a role duting this step. The last piece of the puzzle in the biosynthesis of elsinochrome C is the additional annulation by enolate coupling to afford the dihydrobenzo(ghi)perylenequinone system, catalyzed by the FAD-dependent monooxygenase elcH. This Phaeosphaeria nodorum (strain SN15 / ATCC MYA-4574 / FGSC 10173) (Glume blotch fungus) protein is Fasciclin-like arabinogalactan protein elcF.